Reading from the N-terminus, the 295-residue chain is ATP synthase gamma chain (295 aa).

The protein belongs to the ATPase gamma chain family. As to quaternary structure, F-type ATPases have 2 components, CF(1) - the catalytic core - and CF(0) - the membrane proton channel. CF(1) has five subunits: alpha(3), beta(3), gamma(1), delta(1), epsilon(1). CF(0) has three main subunits: a, b and c.

The protein resides in the cell membrane. Its function is as follows. Produces ATP from ADP in the presence of a proton gradient across the membrane. The gamma chain is believed to be important in regulating ATPase activity and the flow of protons through the CF(0) complex. The sequence is that of ATP synthase gamma chain from Herpetosiphon aurantiacus (strain ATCC 23779 / DSM 785 / 114-95).